A 289-amino-acid polypeptide reads, in one-letter code: 3-methyl-2-oxobutanoate hydroxymethyltransferase (289 aa).

The segment covering 1–10 (MSDSKSSAST) has biased composition (low complexity). The disordered stretch occupies residues 1-33 (MSDSKSSASTSEDRLYGSAPSHDVPKRKTRTHH). 2 residues coordinate Mg(2+): Asp-70 and Asp-109. 3-methyl-2-oxobutanoate contacts are provided by residues 70-71 (DS), Asp-109, and Lys-139. Glu-141 contacts Mg(2+). Glu-207 (proton acceptor) is an active-site residue.

The protein belongs to the PanB family. In terms of assembly, homodecamer; pentamer of dimers. It depends on Mg(2+) as a cofactor.

It localises to the cytoplasm. The catalysed reaction is 3-methyl-2-oxobutanoate + (6R)-5,10-methylene-5,6,7,8-tetrahydrofolate + H2O = 2-dehydropantoate + (6S)-5,6,7,8-tetrahydrofolate. Its pathway is cofactor biosynthesis; (R)-pantothenate biosynthesis; (R)-pantoate from 3-methyl-2-oxobutanoate: step 1/2. Functionally, catalyzes the reversible reaction in which hydroxymethyl group from 5,10-methylenetetrahydrofolate is transferred onto alpha-ketoisovalerate to form ketopantoate. The protein is 3-methyl-2-oxobutanoate hydroxymethyltransferase of Rhodococcus jostii (strain RHA1).